The sequence spans 65 residues: Large ribosomal subunit protein bL35 (65 aa).

Belongs to the bacterial ribosomal protein bL35 family.

The protein is Large ribosomal subunit protein bL35 of Syntrophobacter fumaroxidans (strain DSM 10017 / MPOB).